A 785-amino-acid chain; its full sequence is Cadherin-7 (785 aa).

The N-terminal stretch at 1-27 (MKLGKVELCRFLQLIALFLCFSGMNQA) is a signal peptide. Positions 28-47 (ELPRSRSKPYFQLGRSRTKR) are excised as a propeptide. The Extracellular portion of the chain corresponds to 28-607 (ELPRSRSKPY…AYILPAGLST (580 aa)). Cadherin domains follow at residues 49–153 (WVWN…EPKF), 154–262 (LDGP…PPRF), 263–377 (PRRS…PPVF), 378–482 (SSPL…APEF), and 482–599 (FAMD…AEAY). 2 N-linked (GlcNAc...) asparagine glycosylation sites follow: Asn449 and Asn530. The chain crosses the membrane as a helical span at residues 608-628 (GALIAILACVLTLLVLILLIV). The Cytoplasmic portion of the chain corresponds to 629-785 (TMKRRKKEPL…YGNGQESLYS (157 aa)).

It localises to the cell membrane. In terms of biological role, cadherins are calcium-dependent cell adhesion proteins. They preferentially interact with themselves in a homophilic manner in connecting cells; cadherins may thus contribute to the sorting of heterogeneous cell types. In Rattus norvegicus (Rat), this protein is Cadherin-7 (Cdh7).